The chain runs to 90 residues: Small ribosomal subunit protein uS15 (90 aa).

It belongs to the universal ribosomal protein uS15 family. In terms of assembly, part of the 30S ribosomal subunit. Forms a bridge to the 50S subunit in the 70S ribosome, contacting the 23S rRNA.

Its function is as follows. One of the primary rRNA binding proteins, it binds directly to 16S rRNA where it helps nucleate assembly of the platform of the 30S subunit by binding and bridging several RNA helices of the 16S rRNA. Forms an intersubunit bridge (bridge B4) with the 23S rRNA of the 50S subunit in the ribosome. The sequence is that of Small ribosomal subunit protein uS15 from Helicobacter pylori (strain J99 / ATCC 700824) (Campylobacter pylori J99).